Consider the following 117-residue polypeptide: Large ribosomal subunit protein uL18 (117 aa).

It belongs to the universal ribosomal protein uL18 family. As to quaternary structure, part of the 50S ribosomal subunit; part of the 5S rRNA/L5/L18/L25 subcomplex. Contacts the 5S and 23S rRNAs.

This is one of the proteins that bind and probably mediate the attachment of the 5S RNA into the large ribosomal subunit, where it forms part of the central protuberance. The chain is Large ribosomal subunit protein uL18 from Actinobacillus succinogenes (strain ATCC 55618 / DSM 22257 / CCUG 43843 / 130Z).